Here is an 876-residue protein sequence, read N- to C-terminus: Extended synaptotagmin-2-B (876 aa).

The segment at 1 to 21 is disordered; sequence MASESGAEKGPPTTPAENGQP. Residues 1 to 35 are Cytoplasmic-facing; sequence MASESGAEKGPPTTPAENGQPGVPIAAAVAADEQG. A helical membrane pass occupies residues 36–56; the sequence is MISVDIAGLFYQFSKTFILIF. Residues 57-59 are Lumenal-facing; it reads PVY. Residues 60-80 traverse the membrane as a helical segment; sequence VLGYFGLSFSWLLIALVLLLW. The Cytoplasmic segment spans residues 81 to 876; that stretch reads WRRNKGNKNS…EDGTRAAASS (796 aa). The SMP-LTD domain occupies 123-302; sequence DIERAEWLNK…LPNRITVPLV (180 aa). C2 domains follow at residues 301–421 and 446–592; these read LVSD…DEWF and NLDQ…HLNN. Residues lysine 332, aspartate 333, aspartate 345, aspartate 392, glutamate 393, aspartate 394, aspartate 396, aspartate 398, and aspartate 399 each coordinate Ca(2+). The interval 614–714 is disordered; the sequence is VRSPDEQHTS…KEPTPSIASD (101 aa). Positions 636–656 are enriched in pro residues; sequence PPTPQMPAPSPAVAHKPPPTP. Positions 686 to 698 are enriched in low complexity; it reads SSSSLSGSSFTYS. The C2 3 domain maps to 741-863; it reads PLGQIQLTIR…DAAKGWTQWF (123 aa). The interval 788–795 is required for phosphatidylinositol 4,5-bisphosphate-dependent location at the cell membrane; that stretch reads KRRSGRRK.

The protein belongs to the extended synaptotagmin family. In terms of assembly, interacts with fgfr1 that has been activated by fgf1 binding. Interacts (via C2 domains) with the AP-2 complex (via an alpha subunit). Identified in a complex with the AP-2 complex and fgfr1.

The protein localises to the cell membrane. The protein resides in the endoplasmic reticulum membrane. Its function is as follows. Tethers the endoplasmic reticulum to the cell membrane and promotes the formation of appositions between the endoplasmic reticulum and the cell membrane. Binds glycerophospholipids in a barrel-like domain and may play a role in cellular lipid transport. Plays a role in the rapid internalization of fgfr1 that has been activated by fgf1 binding; this occurs most likely via the AP-2 complex. Required for normal fgf signaling and the activation of downstream signaling cascades via its role in the internalization of activated fgfr1. Required for normal embryonic development via its role in fgf signaling and the downstream regulation of t/xBRA expression. The protein is Extended synaptotagmin-2-B (esyt2-b) of Xenopus laevis (African clawed frog).